Consider the following 91-residue polypeptide: Non-specific lipid-transfer protein 1 (91 aa).

Cystine bridges form between C3-C50, C13-C27, C28-C73, and C48-C87.

This sequence belongs to the plant LTP family.

Plant non-specific lipid-transfer proteins transfer phospholipids as well as galactolipids across membranes. May play a role in wax or cutin deposition in the cell walls of expanding epidermal cells and certain secretory tissues. The sequence is that of Non-specific lipid-transfer protein 1 from Morus nigra (Black mulberry).